A 453-amino-acid polypeptide reads, in one-letter code: Methylenetetrahydrofolate--tRNA-(uracil-5-)-methyltransferase TrmFO (453 aa).

FAD is bound at residue 10-15 (GGGLAG). The interval 433–453 (ELAPWIDSAPPTAVPAAPAAG) is disordered. Over residues 441 to 453 (APPTAVPAAPAAG) the composition is skewed to low complexity.

This sequence belongs to the MnmG family. TrmFO subfamily. It depends on FAD as a cofactor.

Its subcellular location is the cytoplasm. The enzyme catalyses uridine(54) in tRNA + (6R)-5,10-methylene-5,6,7,8-tetrahydrofolate + NADH + H(+) = 5-methyluridine(54) in tRNA + (6S)-5,6,7,8-tetrahydrofolate + NAD(+). It carries out the reaction uridine(54) in tRNA + (6R)-5,10-methylene-5,6,7,8-tetrahydrofolate + NADPH + H(+) = 5-methyluridine(54) in tRNA + (6S)-5,6,7,8-tetrahydrofolate + NADP(+). In terms of biological role, catalyzes the folate-dependent formation of 5-methyl-uridine at position 54 (M-5-U54) in all tRNAs. The chain is Methylenetetrahydrofolate--tRNA-(uracil-5-)-methyltransferase TrmFO from Anaeromyxobacter dehalogenans (strain 2CP-1 / ATCC BAA-258).